The sequence spans 200 residues: Inner membrane-spanning protein YciB (200 aa).

Transmembrane regions (helical) follow at residues 1-21 (MPPL…FFAN), 37-57 (IGAP…IALA), 66-86 (LAIM…LTLW), 103-123 (LFGG…GYVF), 136-156 (KLTL…EIVW), and 167-187 (FKVW…MPLI).

Belongs to the YciB family.

Its subcellular location is the cell inner membrane. In terms of biological role, plays a role in cell envelope biogenesis, maintenance of cell envelope integrity and membrane homeostasis. This is Inner membrane-spanning protein YciB from Brucella melitensis biotype 1 (strain ATCC 23456 / CCUG 17765 / NCTC 10094 / 16M).